A 447-amino-acid polypeptide reads, in one-letter code: Cobyrinate a,c-diamide synthase (447 aa).

Positions 252–439 constitute a GATase cobBQ-type domain; the sequence is KIAVAFDESF…AHQHCIGNPY (188 aa). The Nucleophile role is filled by Cys-331.

It belongs to the CobB/CbiA family. The cofactor is Mg(2+).

It carries out the reaction cob(II)yrinate + 2 L-glutamine + 2 ATP + 2 H2O = cob(II)yrinate a,c diamide + 2 L-glutamate + 2 ADP + 2 phosphate + 2 H(+). It catalyses the reaction Ni-sirohydrochlorin + 2 L-glutamine + 2 ATP + 2 H2O = Ni-sirohydrochlorin a,c-diamide + 2 L-glutamate + 2 ADP + 2 phosphate + 2 H(+). Its pathway is cofactor biosynthesis; adenosylcobalamin biosynthesis; cob(II)yrinate a,c-diamide from sirohydrochlorin (anaerobic route): step 10/10. Its function is as follows. Catalyzes the ATP-dependent amidation of the two carboxylate groups at positions a and c of cobyrinate, using either L-glutamine or ammonia as the nitrogen source. Involved in the biosynthesis of the unique nickel-containing tetrapyrrole coenzyme F430, the prosthetic group of methyl-coenzyme M reductase (MCR), which plays a key role in methanogenesis and anaerobic methane oxidation. Catalyzes the ATP-dependent amidation of the two carboxylate groups at positions a and c of Ni-sirohydrochlorin, using L-glutamine or ammonia as the nitrogen source. In Methanococcus maripaludis (strain C7 / ATCC BAA-1331), this protein is Cobyrinate a,c-diamide synthase.